The following is a 675-amino-acid chain: Transmembrane protein 232 (675 aa).

A helical transmembrane segment spans residues 163–183 (LVKIGYLIFLRLFVFFLHGHL). A coiled-coil region spans residues 598–634 (WQKDMEARKREEEAYKAQNQKDKEEKEKIHFQEIMKQ). The segment at 605 to 624 (RKREEEAYKAQNQKDKEEKE) is disordered.

As to expression, high expression in the testis and weak expression levels in the spleen, liver, brain, uterus, lung, epididymis and kidney. Not detected in the heart or ovary.

The protein localises to the membrane. In terms of biological role, plays a critical role for male fertility and sperm motility by regulating sperm cytoplasm removal and maintaining axoneme integrity. This chain is Transmembrane protein 232 (Tmem232), found in Mus musculus (Mouse).